Reading from the N-terminus, the 539-residue chain is Phosphoenolpyruvate carboxykinase (ATP) (539 aa).

Substrate contacts are provided by arginine 64, tyrosine 206, and lysine 212. Residues lysine 212, histidine 231, and 247-255 (GLSGTGKTT) each bind ATP. 2 residues coordinate Mn(2+): lysine 212 and histidine 231. Aspartate 268 provides a ligand contact to Mn(2+). Residues glutamate 296, arginine 332, 448–449 (RI), and threonine 454 each bind ATP. Arginine 332 is a binding site for substrate.

Belongs to the phosphoenolpyruvate carboxykinase (ATP) family. In terms of assembly, monomer. Mn(2+) is required as a cofactor.

The protein resides in the cytoplasm. The enzyme catalyses oxaloacetate + ATP = phosphoenolpyruvate + ADP + CO2. The protein operates within carbohydrate biosynthesis; gluconeogenesis. In terms of biological role, involved in the gluconeogenesis. Catalyzes the conversion of oxaloacetate (OAA) to phosphoenolpyruvate (PEP) through direct phosphoryl transfer between the nucleoside triphosphate and OAA. The sequence is that of Phosphoenolpyruvate carboxykinase (ATP) from Pectobacterium carotovorum subsp. carotovorum (strain PC1).